A 468-amino-acid chain; its full sequence is ATP synthase subunit beta (468 aa).

An ATP-binding site is contributed by 148–155 (GGAGVGKT).

The protein belongs to the ATPase alpha/beta chains family. In terms of assembly, F-type ATPases have 2 components, CF(1) - the catalytic core - and CF(0) - the membrane proton channel. CF(1) has five subunits: alpha(3), beta(3), gamma(1), delta(1), epsilon(1). CF(0) has three main subunits: a(1), b(2) and c(9-12). The alpha and beta chains form an alternating ring which encloses part of the gamma chain. CF(1) is attached to CF(0) by a central stalk formed by the gamma and epsilon chains, while a peripheral stalk is formed by the delta and b chains.

The protein resides in the cell inner membrane. The enzyme catalyses ATP + H2O + 4 H(+)(in) = ADP + phosphate + 5 H(+)(out). Functionally, produces ATP from ADP in the presence of a proton gradient across the membrane. The catalytic sites are hosted primarily by the beta subunits. The sequence is that of ATP synthase subunit beta from Xanthomonas campestris pv. campestris (strain 8004).